The following is a 158-amino-acid chain: MAVKIRLLRMGKIRNPQYRIVIADSRTKRDGRAIEFVGIYQPKEDPSVIEVKSDRVQYWLSVGAQPSEAVQRLLEKTGDWQKFKGLPAPEPLKVAPERVDRKAAYEAEAKAAAGLAEAPTKPAKKAPKAEAAPKTEAAPKADAPKTEEQAGAGSGEQG.

The segment covering Ala111–Lys121 has biased composition (low complexity). Positions Ala111 to Gly158 are disordered. Over residues Pro127–Glu148 the composition is skewed to basic and acidic residues.

Belongs to the bacterial ribosomal protein bS16 family.

The sequence is that of Small ribosomal subunit protein bS16 from Salinispora arenicola (strain CNS-205).